Consider the following 712-residue polypeptide: Polyphosphate kinase (712 aa).

Asn-49 is an ATP binding site. Residues Arg-398 and Arg-428 each contribute to the Mg(2+) site. Catalysis depends on His-458, which acts as the Phosphohistidine intermediate. Residues Tyr-491, Arg-587, and His-615 each contribute to the ATP site.

This sequence belongs to the polyphosphate kinase 1 (PPK1) family. Requires Mg(2+) as cofactor. In terms of processing, an intermediate of this reaction is the autophosphorylated ppk in which a phosphate is covalently linked to a histidine residue through a N-P bond.

It carries out the reaction [phosphate](n) + ATP = [phosphate](n+1) + ADP. In terms of biological role, catalyzes the reversible transfer of the terminal phosphate of ATP to form a long-chain polyphosphate (polyP). This chain is Polyphosphate kinase, found in Prochlorococcus marinus (strain MIT 9313).